Reading from the N-terminus, the 176-residue chain is Peptide methionine sulfoxide reductase MsrA (176 aa).

Cys10 is an active-site residue.

This sequence belongs to the MsrA Met sulfoxide reductase family.

The enzyme catalyses L-methionyl-[protein] + [thioredoxin]-disulfide + H2O = L-methionyl-(S)-S-oxide-[protein] + [thioredoxin]-dithiol. It catalyses the reaction [thioredoxin]-disulfide + L-methionine + H2O = L-methionine (S)-S-oxide + [thioredoxin]-dithiol. In terms of biological role, has an important function as a repair enzyme for proteins that have been inactivated by oxidation. Catalyzes the reversible oxidation-reduction of methionine sulfoxide in proteins to methionine. The protein is Peptide methionine sulfoxide reductase MsrA of Sulfolobus acidocaldarius (strain ATCC 33909 / DSM 639 / JCM 8929 / NBRC 15157 / NCIMB 11770).